The following is a 561-amino-acid chain: DNA ligase B (561 aa).

The active-site N6-AMP-lysine intermediate is the K125.

Belongs to the NAD-dependent DNA ligase family. LigB subfamily.

It catalyses the reaction NAD(+) + (deoxyribonucleotide)n-3'-hydroxyl + 5'-phospho-(deoxyribonucleotide)m = (deoxyribonucleotide)n+m + AMP + beta-nicotinamide D-nucleotide.. Its function is as follows. Catalyzes the formation of phosphodiester linkages between 5'-phosphoryl and 3'-hydroxyl groups in double-stranded DNA using NAD as a coenzyme and as the energy source for the reaction. This Salmonella paratyphi B (strain ATCC BAA-1250 / SPB7) protein is DNA ligase B.